The chain runs to 293 residues: ATP synthase gamma chain (293 aa).

This sequence belongs to the ATPase gamma chain family. F-type ATPases have 2 components, CF(1) - the catalytic core - and CF(0) - the membrane proton channel. CF(1) has five subunits: alpha(3), beta(3), gamma(1), delta(1), epsilon(1). CF(0) has three main subunits: a, b and c.

The protein resides in the cell inner membrane. Functionally, produces ATP from ADP in the presence of a proton gradient across the membrane. The gamma chain is believed to be important in regulating ATPase activity and the flow of protons through the CF(0) complex. This Leptothrix cholodnii (strain ATCC 51168 / LMG 8142 / SP-6) (Leptothrix discophora (strain SP-6)) protein is ATP synthase gamma chain.